We begin with the raw amino-acid sequence, 684 residues long: MMRSLKSRKLVFILAMLFLINAIVSLKFITYSSANQLASKSKYIEYNFENKSVSPLAKYPSNVVLKVTNSTCAEGTFSVLVAGRKNANDGVIVDITKFLDFSREYEVSFYVLQTTKKLQRISVTLEILDSNDKNQVIAAEKVLLPNIWTKVSAKVQASNYKKAKRINLIVNMPTSKSDSFYIDLFTIKDLENAYVLKQENFENKNTGGFLPEDKNCKITLAKDRAYSSAYSLKVQPSQKTKNGKILFPIKGLLQKGGTYDFSLLVYQDSSKPVNFSAGIKLNDGKSTKEIVLAKQNVAPKKWTQLFATLDLDTRFSAKDVSFFVKPAAAISYYLDLYSISDENWGQPVPDYNLPSLCEKYKNYFKIGVAVPYRALTNPVDVEVIKRHFNSITPENEMKPESLQPYEGGFSFSIADEYVDFCKKDNISLRGHTLVWHQQTPSWFFTNPETGEKLTNSEKDKEILLDRLKKHIQTVVGRYKGKVYAWDVVNEAIDENQPDGYRRSDWYNILGPEYIEKAFIWAHEADPKAKLFYNDYSTEDPYKREFIYKLIKNLKAKGVPVHGVGLQCHISLDWPDVSEIEETVKLFSRIPGLEIHFTEIDISIAKNMTDDDAYNRYLLVQQAQKLKAIFDVLKKYRNVVTSVTFWGLKDDYSWLRGDMPLLSDKDYQPKFAFWSLIDPSVVPKE.

Positions 1–34 are cleaved as a signal peptide; that stretch reads MMRSLKSRKLVFILAMLFLINAIVSLKFITYSSA. 2 CBM-cenC domains span residues 40–190 and 193–342; these read KSKY…IKDL and AYVL…ISDE. Residues 350 to 678 form the GH10 domain; that stretch reads DYNLPSLCEK…KFAFWSLIDP (329 aa). Glu490 functions as the Proton donor in the catalytic mechanism. The Nucleophile role is filled by Glu598.

It belongs to the glycosyl hydrolase 10 (cellulase F) family.

The enzyme catalyses Endohydrolysis of (1-&gt;4)-beta-D-xylosidic linkages in xylans.. It functions in the pathway glycan degradation; xylan degradation. This chain is Endo-1,4-beta-xylanase A (xynA), found in Caldicellulosiruptor sp. (strain Rt8B.4).